The following is a 341-amino-acid chain: UDP-glucose 4-epimerase (341 aa).

It belongs to the polysaccharide synthase family.

The enzyme catalyses UDP-alpha-D-glucose = UDP-alpha-D-galactose. Epimerizes UDP-galactose to UDP-glucose. In Rickettsia typhi (strain ATCC VR-144 / Wilmington), this protein is UDP-glucose 4-epimerase (capD).